Reading from the N-terminus, the 365-residue chain is Histidinol-phosphate aminotransferase (365 aa).

The residue at position 220 (Lys220) is an N6-(pyridoxal phosphate)lysine.

Belongs to the class-II pyridoxal-phosphate-dependent aminotransferase family. Histidinol-phosphate aminotransferase subfamily. In terms of assembly, homodimer. Pyridoxal 5'-phosphate serves as cofactor.

The catalysed reaction is L-histidinol phosphate + 2-oxoglutarate = 3-(imidazol-4-yl)-2-oxopropyl phosphate + L-glutamate. It functions in the pathway amino-acid biosynthesis; L-histidine biosynthesis; L-histidine from 5-phospho-alpha-D-ribose 1-diphosphate: step 7/9. The polypeptide is Histidinol-phosphate aminotransferase (Neisseria meningitidis serogroup A / serotype 4A (strain DSM 15465 / Z2491)).